We begin with the raw amino-acid sequence, 241 residues long: MEYVNPEGLRLDGRRFNEMRQIVAEVGVVSKADGSAVFEMGNTKVIAAVYGPREIQNKSQQKKNDHAVVLCEYSMAQFSTGDRRRQKFDRRSTELSLVIRQTMEACILTELMPHSQIDIFLQVLQADGGTRSACINAATLALADAGIPMRDLAVSCSAGYLNSTPLLDLNYVEDSAGGADVTVGILPKLDKVSLLQMDAKLPMETFETVFALASEGCKAIAERIREVLQENTKQLEYRRAA.

Met1 is subject to N-acetylmethionine.

Belongs to the RNase PH family. As to quaternary structure, component of the RNA exosome complex. Interacts with RPP4.

It localises to the cytoplasm. The protein localises to the nucleus. The protein resides in the nucleolus. Its function is as follows. Non-catalytic component of the RNA exosome complex which has 3'-&gt;5' exoribonuclease activity and participates in a multitude of cellular RNA processing, maturation and degradation events. In vitro, is a processive phosphorolytic exonuclease and requires a single-stranded poly(A) tail on the substrate RNA for its activity. Can complement the growth defect of a yeast mutant lacking RRP41 exonuclease. Required for normal development of female gametophytes. This is Exosome complex component RRP41 homolog from Arabidopsis thaliana (Mouse-ear cress).